The chain runs to 214 residues: N-(5'-phosphoribosyl)anthranilate isomerase (214 aa).

It belongs to the TrpF family.

The enzyme catalyses N-(5-phospho-beta-D-ribosyl)anthranilate = 1-(2-carboxyphenylamino)-1-deoxy-D-ribulose 5-phosphate. It participates in amino-acid biosynthesis; L-tryptophan biosynthesis; L-tryptophan from chorismate: step 3/5. This Rhodospirillum centenum (strain ATCC 51521 / SW) protein is N-(5'-phosphoribosyl)anthranilate isomerase.